We begin with the raw amino-acid sequence, 341 residues long: Queuosine 5'-phosphate N-glycosylase/hydrolase (341 aa).

An N-acetylmethionine modification is found at methionine 1. Residues histidine 53, phenylalanine 237, aspartate 239, aspartate 314, tyrosine 315, and aspartate 319 each coordinate queuine. The active-site Nucleophile or transition state stabilizer is the aspartate 239.

The protein belongs to the QNG1 protein family.

It carries out the reaction queuosine 5'-phosphate + H2O = queuine + D-ribose 5-phosphate. Its function is as follows. Catalyzes the hydrolysis of queuosine 5'-phosphate, releasing the nucleobase queuine (q). Is required for salvage of queuine from exogenous queuosine (Q) that is imported and then converted to queuosine 5'-phosphate intracellularly. This Bos taurus (Bovine) protein is Queuosine 5'-phosphate N-glycosylase/hydrolase.